A 289-amino-acid polypeptide reads, in one-letter code: Protease HtpX homolog (289 aa).

The next 2 helical transmembrane spans lie at 3–23 (IVGT…WFFF) and 28–48 (TILA…YKVG). Histidine 129 is a binding site for Zn(2+). Residue glutamate 130 is part of the active site. Position 133 (histidine 133) interacts with Zn(2+). The next 2 helical transmembrane spans lie at 144 to 164 (LGQG…LFSG) and 172 to 192 (FLAI…VLAI). A Zn(2+)-binding site is contributed by glutamate 197. Residues 222 to 250 (SQGNEQAAQQQRQRTSRGRGRRQRGQRND) are disordered. Residues 235-246 (RTSRGRGRRQRG) show a composition bias toward basic residues.

Belongs to the peptidase M48B family. It depends on Zn(2+) as a cofactor.

The protein localises to the cell membrane. This Halobacterium salinarum (strain ATCC 700922 / JCM 11081 / NRC-1) (Halobacterium halobium) protein is Protease HtpX homolog.